The following is a 430-amino-acid chain: uncharacterized protein (430 aa).

This is an uncharacterized protein from Bos taurus (Bovine).